Here is a 324-residue protein sequence, read N- to C-terminus: Ribose 1,5-bisphosphate isomerase (324 aa).

Substrate-binding positions include 22-25 (RGAG) and R65. C135 (proton acceptor) is an active-site residue. 137–139 (SKA) is a substrate binding site. D204 serves as the catalytic Proton donor. K240 is a binding site for substrate.

Belongs to the eIF-2B alpha/beta/delta subunits family. R15P isomerase subfamily.

It carries out the reaction alpha-D-ribose 1,5-bisphosphate = D-ribulose 1,5-bisphosphate. In terms of biological role, catalyzes the isomerization of ribose 1,5-bisphosphate (R15P) to ribulose 1,5-bisphosphate (RuBP), the CO(2) acceptor and substrate for RubisCO. Functions in an archaeal AMP degradation pathway, together with AMP phosphorylase and RubisCO. The protein is Ribose 1,5-bisphosphate isomerase of Pyrococcus furiosus (strain ATCC 43587 / DSM 3638 / JCM 8422 / Vc1).